Consider the following 153-residue polypeptide: Insulin-like growth factor 1 (153 aa).

The interval 49–77 is b; sequence GPETLCGAELVDALQFVCGDRGFYFNKPT. 3 disulfides stabilise this stretch: Cys-54–Cys-96, Cys-66–Cys-109, and Cys-95–Cys-100. The interval 78–89 is c; the sequence is GYGSSSRRAPQT. The a stretch occupies residues 90–110; sequence GIVDECCFRSCDLRRLEMYCA. The d stretch occupies residues 111-118; that stretch reads PLKPAKSA. Positions 119–153 are cleaved as a propeptide — e peptide; the sequence is RSVRAQRHTDMPKAQKEVHLKNASRGSAGNKNYRM. The disordered stretch occupies residues 120 to 153; sequence SVRAQRHTDMPKAQKEVHLKNASRGSAGNKNYRM. Residues 125 to 138 show a composition bias toward basic and acidic residues; the sequence is RHTDMPKAQKEVHL. Positions 142–153 are enriched in polar residues; the sequence is SRGSAGNKNYRM.

It belongs to the insulin family. In terms of assembly, forms a ternary complex with IGFR1 and ITGAV:ITGB3. Forms a ternary complex with IGFR1 and ITGA6:ITGB4. Forms a ternary complex with IGFBP3 and ALS.

It is found in the secreted. The insulin-like growth factors, isolated from plasma, are structurally and functionally related to insulin but have a much higher growth-promoting activity. May be a physiological regulator of [1-14C]-2-deoxy-D-glucose (2DG) transport and glycogen synthesis in osteoblasts. Stimulates glucose transport in bone-derived osteoblastic (PyMS) cells and is effective at much lower concentrations than insulin, not only regarding glycogen and DNA synthesis but also with regard to enhancing glucose uptake. May play a role in synapse maturation. Ca(2+)-dependent exocytosis of IGF1 is required for sensory perception of smell in the olfactory bulb. Acts as a ligand for IGF1R. Binds to the alpha subunit of IGF1R, leading to the activation of the intrinsic tyrosine kinase activity which autophosphorylates tyrosine residues in the beta subunit thus initiating a cascade of down-stream signaling events leading to activation of the PI3K-AKT/PKB and the Ras-MAPK pathways. Binds to integrins ITGAV:ITGB3 and ITGA6:ITGB4. Its binding to integrins and subsequent ternary complex formation with integrins and IGFR1 are essential for IGF1 signaling. Induces the phosphorylation and activation of IGFR1, MAPK3/ERK1, MAPK1/ERK2 and AKT1. As part of the MAPK/ERK signaling pathway, acts as a negative regulator of apoptosis in cardiomyocytes via promotion of STUB1/CHIP-mediated ubiquitination and degradation of ICER-type isoforms of CREM. This is Insulin-like growth factor 1 from Rhinopithecus roxellana (Golden snub-nosed monkey).